Reading from the N-terminus, the 77-residue chain is Small ribosomal subunit protein bS16c (77 aa).

The protein belongs to the bacterial ribosomal protein bS16 family.

It localises to the plastid. The protein resides in the cyanelle. The sequence is that of Small ribosomal subunit protein bS16c from Cyanophora paradoxa.